The following is a 2512-amino-acid chain: Fatty acid synthase (2512 aa).

At E2 the chain carries N-acetylglutamate. One can recognise a Ketosynthase family 3 (KS3) domain in the interval 2-406 (EDVVIAGIAG…GSNAHVILRP (405 aa)). Residues C161, H293, and H331 each act as for beta-ketoacyl synthase activity in the active site. The segment at 427 to 815 (GRTQEAVEIL…GINVLGNNLF (389 aa)) is acyl and malonyl transferases. S580 acts as the For acyl/malonyl transferase activity in catalysis. An acyl-CoA is bound by residues 646-647 (DT), F670, and R772. The N-terminal hotdog fold stretch occupies residues 844 to 967 (PKAEDFPSGS…ISLLENDALK (124 aa)). Positions 844-1111 (PKAEDFPSGS…ASVAPRRQQE (268 aa)) constitute a PKS/mFAS DH domain. The active-site Proton acceptor; for dehydratase activity is H878. The interval 984 to 1111 (AKSGLLMEDV…ASVAPRRQQE (128 aa)) is C-terminal hotdog fold. The active-site Proton donor; for dehydratase activity is D1034. C1475 carries the post-translational modification S-nitrosocysteine. The interval 1638 to 1866 (WEVPENWTLE…MIKIQEEEKQ (229 aa)) is enoyl reductase. 1675–1692 (VLIHSGSGGVGQAAIAIA) provides a ligand contact to NADP(+). Position 1708 is an N6-(pyridoxal phosphate)lysine (K1708). The tract at residues 1867–2119 (YPLRSEPVKL…SFVLAEKVSV (253 aa)) is beta-ketoacyl reductase. Position 1889–1904 (1889–1904 (SYIITGGLGGFGLELA)) interacts with NADP(+). At C2093 the chain carries S-nitrosocysteine. A Carrier domain is found at 2120 to 2200 (KSEGGSQRDL…ELSSKTGTAE (81 aa)). S2158 is modified (O-(pantetheine 4'-phosphoryl)serine). The tract at residues 2209–2511 (KTGPGEPPKL…LAEPRVSVRE (303 aa)) is thioesterase. Active-site for thioesterase activity residues include S2309 and H2482.

Homodimer which is arranged in a head to tail fashion. Post-translationally, S-nitrosylation of Fatty acid synthase at cysteine residues Cys-1475 or Cys-2093 is important for the enzyme dimerization. In adipocytes, S-nitrosylation of Fatty acid synthase occurs under physiological conditions and gradually increases during adipogenesis.

The catalysed reaction is acetyl-CoA + n malonyl-CoA + 2n NADPH + 2n H(+) = a long-chain fatty acid + (n+1) CoA + n CO2 + 2n NADP(+).. It catalyses the reaction holo-[ACP] + acetyl-CoA = acetyl-[ACP] + CoA. The enzyme catalyses holo-[ACP] + malonyl-CoA = malonyl-[ACP] + CoA. It carries out the reaction a fatty acyl-[ACP] + malonyl-[ACP] + H(+) = a 3-oxoacyl-[ACP] + holo-[ACP] + CO2. The catalysed reaction is a (3R)-hydroxyacyl-[ACP] + NADP(+) = a 3-oxoacyl-[ACP] + NADPH + H(+). It catalyses the reaction a (3R)-hydroxyacyl-[ACP] = a (2E)-enoyl-[ACP] + H2O. The enzyme catalyses a 2,3-saturated acyl-[ACP] + NADP(+) = a (2E)-enoyl-[ACP] + NADPH + H(+). It carries out the reaction hexadecanoyl-[ACP] + H2O = hexadecanoate + holo-[ACP] + H(+). The catalysed reaction is acetyl-[ACP] + malonyl-[ACP] + H(+) = 3-oxobutanoyl-[ACP] + holo-[ACP] + CO2. It catalyses the reaction 3-oxobutanoyl-[ACP] + NADPH + H(+) = (3R)-hydroxybutanoyl-[ACP] + NADP(+). The enzyme catalyses (3R)-hydroxybutanoyl-[ACP] = (2E)-butenoyl-[ACP] + H2O. It carries out the reaction (2E)-butenoyl-[ACP] + NADPH + H(+) = butanoyl-[ACP] + NADP(+). The catalysed reaction is butanoyl-[ACP] + malonyl-[ACP] + H(+) = 3-oxohexanoyl-[ACP] + holo-[ACP] + CO2. It catalyses the reaction 3-oxohexanoyl-[ACP] + NADPH + H(+) = (3R)-hydroxyhexanoyl-[ACP] + NADP(+). The enzyme catalyses (3R)-hydroxyhexanoyl-[ACP] = (2E)-hexenoyl-[ACP] + H2O. It carries out the reaction (2E)-hexenoyl-[ACP] + NADPH + H(+) = hexanoyl-[ACP] + NADP(+). The catalysed reaction is hexanoyl-[ACP] + malonyl-[ACP] + H(+) = 3-oxooctanoyl-[ACP] + holo-[ACP] + CO2. It catalyses the reaction 3-oxooctanoyl-[ACP] + NADPH + H(+) = (3R)-hydroxyoctanoyl-[ACP] + NADP(+). The enzyme catalyses (3R)-hydroxyoctanoyl-[ACP] = (2E)-octenoyl-[ACP] + H2O. It carries out the reaction (2E)-octenoyl-[ACP] + NADPH + H(+) = octanoyl-[ACP] + NADP(+). The catalysed reaction is octanoyl-[ACP] + malonyl-[ACP] + H(+) = 3-oxodecanoyl-[ACP] + holo-[ACP] + CO2. It catalyses the reaction 3-oxodecanoyl-[ACP] + NADPH + H(+) = (3R)-hydroxydecanoyl-[ACP] + NADP(+). The enzyme catalyses (3R)-hydroxydecanoyl-[ACP] = (2E)-decenoyl-[ACP] + H2O. It carries out the reaction (2E)-decenoyl-[ACP] + NADPH + H(+) = decanoyl-[ACP] + NADP(+). The catalysed reaction is decanoyl-[ACP] + malonyl-[ACP] + H(+) = 3-oxododecanoyl-[ACP] + holo-[ACP] + CO2. It catalyses the reaction 3-oxododecanoyl-[ACP] + NADPH + H(+) = (3R)-hydroxydodecanoyl-[ACP] + NADP(+). The enzyme catalyses (3R)-hydroxydodecanoyl-[ACP] = (2E)-dodecenoyl-[ACP] + H2O. It carries out the reaction (2E)-dodecenoyl-[ACP] + NADPH + H(+) = dodecanoyl-[ACP] + NADP(+). The catalysed reaction is dodecanoyl-[ACP] + malonyl-[ACP] + H(+) = 3-oxotetradecanoyl-[ACP] + holo-[ACP] + CO2. It catalyses the reaction 3-oxotetradecanoyl-[ACP] + NADPH + H(+) = (3R)-hydroxytetradecanoyl-[ACP] + NADP(+). The enzyme catalyses (3R)-hydroxytetradecanoyl-[ACP] = (2E)-tetradecenoyl-[ACP] + H2O. It carries out the reaction (2E)-tetradecenoyl-[ACP] + NADPH + H(+) = tetradecanoyl-[ACP] + NADP(+). The catalysed reaction is tetradecanoyl-[ACP] + malonyl-[ACP] + H(+) = 3-oxohexadecanoyl-[ACP] + holo-[ACP] + CO2. It catalyses the reaction 3-oxohexadecanoyl-[ACP] + NADPH + H(+) = (3R)-hydroxyhexadecanoyl-[ACP] + NADP(+). The enzyme catalyses (3R)-hydroxyhexadecanoyl-[ACP] = (2E)-hexadecenoyl-[ACP] + H2O. It carries out the reaction (2E)-hexadecenoyl-[ACP] + NADPH + H(+) = hexadecanoyl-[ACP] + NADP(+). The catalysed reaction is hexadecanoyl-[ACP] + malonyl-[ACP] + H(+) = 3-oxooctadecanoyl-[ACP] + holo-[ACP] + CO2. It catalyses the reaction 3-oxooctadecanoyl-[ACP] + NADPH + H(+) = (3R)-hydroxyoctadecanoyl-[ACP] + NADP(+). The enzyme catalyses (3R)-hydroxyoctadecanoyl-[ACP] = (2E)-octadecenoyl-[ACP] + H2O. It carries out the reaction (2E)-octadecenoyl-[ACP] + NADPH + H(+) = octadecanoyl-[ACP] + NADP(+). The catalysed reaction is tetradecanoyl-[ACP] + H2O = tetradecanoate + holo-[ACP] + H(+). It catalyses the reaction octadecanoyl-[ACP] + H2O = octadecanoate + holo-[ACP] + H(+). It functions in the pathway lipid metabolism; fatty acid biosynthesis. Its activity is regulated as follows. Cerulenin, a potent non-competitive pharmacological inhibitor of FAS, binds covalently to the active site of the condensing enzyme region, inactivating a key enzyme step in fatty acid synthesis. Fatty acid synthetase is a multifunctional enzyme that catalyzes the de novo biosynthesis of long-chain saturated fatty acids starting from acetyl-CoA and malonyl-CoA in the presence of NADPH. This multifunctional protein contains 7 catalytic activities and a site for the binding of the prosthetic group 4'-phosphopantetheine of the acyl carrier protein ([ACP]) domain. This Gallus gallus (Chicken) protein is Fatty acid synthase (FASN).